We begin with the raw amino-acid sequence, 331 residues long: tRNA-cytidine(32) 2-sulfurtransferase (331 aa).

The interval 1–31 is disordered; the sequence is MNAPHMNDTTADAATLDATAAPAGRPALTRR. The segment covering 8–23 has biased composition (low complexity); the sequence is DTTADAATLDATAAPA. A PP-loop motif motif is present at residues 71 to 76; sequence SGGKDS. The [4Fe-4S] cluster site is built by Cys146, Cys149, and Cys237.

The protein belongs to the TtcA family. As to quaternary structure, homodimer. It depends on Mg(2+) as a cofactor. [4Fe-4S] cluster serves as cofactor.

The protein localises to the cytoplasm. The enzyme catalyses cytidine(32) in tRNA + S-sulfanyl-L-cysteinyl-[cysteine desulfurase] + AH2 + ATP = 2-thiocytidine(32) in tRNA + L-cysteinyl-[cysteine desulfurase] + A + AMP + diphosphate + H(+). It participates in tRNA modification. Functionally, catalyzes the ATP-dependent 2-thiolation of cytidine in position 32 of tRNA, to form 2-thiocytidine (s(2)C32). The sulfur atoms are provided by the cysteine/cysteine desulfurase (IscS) system. This is tRNA-cytidine(32) 2-sulfurtransferase from Burkholderia lata (strain ATCC 17760 / DSM 23089 / LMG 22485 / NCIMB 9086 / R18194 / 383).